Reading from the N-terminus, the 550-residue chain is Chaperonin GroEL (550 aa).

ATP contacts are provided by residues 30–33 (TLGP), K51, 87–91 (DGTTT), G414, and D494.

Belongs to the chaperonin (HSP60) family. Forms a cylinder of 14 subunits composed of two heptameric rings stacked back-to-back. Interacts with the co-chaperonin GroES.

The protein resides in the cytoplasm. It catalyses the reaction ATP + H2O + a folded polypeptide = ADP + phosphate + an unfolded polypeptide.. In terms of biological role, together with its co-chaperonin GroES, plays an essential role in assisting protein folding. The GroEL-GroES system forms a nano-cage that allows encapsulation of the non-native substrate proteins and provides a physical environment optimized to promote and accelerate protein folding. The protein is Chaperonin GroEL of Buchnera aphidicola subsp. Thelaxes suberi.